An 837-amino-acid polypeptide reads, in one-letter code: Striatin-interacting protein 1 (837 aa).

An N-acetylmethionine modification is found at Met-1. Disordered stretches follow at residues 1–67 and 333–423; these read MEPA…ESPD and AASP…KGLP. Pro residues predominate over residues 18 to 35; sequence PQPPPPPPPATAQPPPGA. Basic and acidic residues predominate over residues 47–60; that stretch reads KAREFNRNQRKDSE. Ser-59, Ser-335, and Ser-339 each carry phosphoserine. The segment covering 356–377 has biased composition (basic and acidic residues); that stretch reads KALIKQDNLDAFNERDPYKADD. Positions 378-391 are enriched in acidic residues; sequence SREEEEENDDDSSL. Phosphoserine is present on Ser-788. The interval 796–837 is required for STRIPAK core complex formation; sequence DNCLQSVLGQRVDLPEDFQMNYDLWLEREVFSKPISWEELLQ.

It belongs to the STRIP family. Part of the core of STRIPAK complexes composed of PP2A catalytic and scaffolding subunits, the striatins (PP2A regulatory subunits), the striatin-associated proteins MOB4, STRIP1 and STRIP2, PDCD10 and members of the STE20 kinases, such as STK24 and STK26. The STRIPAK complex can be extended by adapter proteins such as SLMAP:SIKE1, CTTNBP2 or CTTNBP2NL. Interacts with CDC42BPB. Interacts with CTTNBP2NL.

Its subcellular location is the cytoplasm. Its function is as follows. Plays a role in the regulation of cell morphology and cytoskeletal organization. Required in the cortical actin filament dynamics and cell shape. Part of the striatin-interacting phosphatase and kinase (STRIPAK) complexes. STRIPAK complexes have critical roles in protein (de)phosphorylation and are regulators of multiple signaling pathways including Hippo, MAPK, nuclear receptor and cytoskeleton remodeling. Different types of STRIPAK complexes are involved in a variety of biological processes such as cell growth, differentiation, apoptosis, metabolism and immune regulation. The chain is Striatin-interacting protein 1 (Strip1) from Mus musculus (Mouse).